The following is a 306-amino-acid chain: Ornithine carbamoyltransferase (306 aa).

Residues 53 to 56, Q80, R104, and 131 to 134 contribute to the carbamoyl phosphate site; these read STRT and HPCQ. Residues N162, D220, and 224–225 contribute to the L-ornithine site; that span reads SM. Carbamoyl phosphate-binding positions include 260 to 261 and R288; that span reads CL.

This sequence belongs to the aspartate/ornithine carbamoyltransferase superfamily. OTCase family.

Its subcellular location is the cytoplasm. It carries out the reaction carbamoyl phosphate + L-ornithine = L-citrulline + phosphate + H(+). It participates in amino-acid biosynthesis; L-arginine biosynthesis; L-arginine from L-ornithine and carbamoyl phosphate: step 1/3. Its function is as follows. Reversibly catalyzes the transfer of the carbamoyl group from carbamoyl phosphate (CP) to the N(epsilon) atom of ornithine (ORN) to produce L-citrulline. The sequence is that of Ornithine carbamoyltransferase from Methylobacillus flagellatus (strain ATCC 51484 / DSM 6875 / VKM B-1610 / KT).